A 117-amino-acid chain; its full sequence is uncharacterized protein (117 aa).

The protein to H.influenzae HI_1162 and to HI_0925.

This is an uncharacterized protein from Escherichia coli (strain K12).